The sequence spans 389 residues: GDSL esterase/lipase At5g14450 (389 aa).

Residues 1 to 30 (MKDNLERAKLMVSSTVFSWLLLCLFAVTTS) form the signal peptide. Ser-48 (nucleophile) is an active-site residue. Asn-125 and Asn-335 each carry an N-linked (GlcNAc...) asparagine glycan. Catalysis depends on residues Asp-354 and His-357.

Belongs to the 'GDSL' lipolytic enzyme family.

Its subcellular location is the secreted. This Arabidopsis thaliana (Mouse-ear cress) protein is GDSL esterase/lipase At5g14450.